A 339-amino-acid polypeptide reads, in one-letter code: Protoheme IX farnesyltransferase (339 aa).

The segment at 1-27 is disordered; sequence MTVADPRLTDAPAHSRTSLLGRRRGGR. 9 helical membrane-spanning segments follow: residues 45-65, 67-87, 117-136, 140-159, 165-185, 191-211, 236-256, 257-277, and 309-329; these read IVELLLITTIPVMLFAAGGLP, GWLILTTFVGGALAAGCANTL, ALVFATVLGIASTAIFVAFV, SAALALGAILLYVVGYTLLL, QNIVWGGVAGCMQVLIGWTAV, WAPFVLFGVIFLWTPPHYWPL, VSRQIVLYTIAMVLCSLLLVP, LGGAGVVYGAAALVLGIGFLV, and PMGVFHGSITYLTLLSAAVAV.

It belongs to the UbiA prenyltransferase family. Protoheme IX farnesyltransferase subfamily.

It is found in the cell membrane. The catalysed reaction is heme b + (2E,6E)-farnesyl diphosphate + H2O = Fe(II)-heme o + diphosphate. It participates in porphyrin-containing compound metabolism; heme O biosynthesis; heme O from protoheme: step 1/1. Its function is as follows. Converts heme B (protoheme IX) to heme O by substitution of the vinyl group on carbon 2 of heme B porphyrin ring with a hydroxyethyl farnesyl side group. The protein is Protoheme IX farnesyltransferase of Kineococcus radiotolerans (strain ATCC BAA-149 / DSM 14245 / SRS30216).